The chain runs to 176 residues: MARVLKAAAANAVGLFSRLQAPIPTVRASSTSQPLDQVTGSVWNLGRLNHVAIAVPDLEKAAAFYKNILGAQVSEAVPLPEHGVSVVFVNLGNTKMELLHPLGRDSPIAGFLQKNKAGGMHHICIEVDNINAAVMDLKKKKIRSLSEEVKIGAHGKPVIFLHPKDCGGVLVELEQA.

Residues 1–36 (MARVLKAAAANAVGLFSRLQAPIPTVRASSTSQPLD) constitute a mitochondrion transit peptide. One can recognise a VOC domain in the interval 47–176 (RLNHVAIAVP…GGVLVELEQA (130 aa)). His-50 serves as a coordination point for Co(2+). Lys-114 carries the post-translational modification N6-succinyllysine. His-122 provides a ligand contact to Co(2+). Lys-150 is subject to N6-acetyllysine; alternate. Position 150 is an N6-succinyllysine; alternate (Lys-150). Glu-172 contributes to the Co(2+) binding site.

This sequence belongs to the methylmalonyl-CoA epimerase family.

It localises to the mitochondrion. The enzyme catalyses (R)-methylmalonyl-CoA = (S)-methylmalonyl-CoA. In terms of biological role, methylmalonyl-CoA epimerase involved in propionyl-CoA metabolism. This is Methylmalonyl-CoA epimerase, mitochondrial from Homo sapiens (Human).